We begin with the raw amino-acid sequence, 889 residues long: Oxysterol-binding protein-related protein 8 (889 aa).

M1 carries the post-translational modification N-acetylmethionine. Positions 1-129 are disordered; it reads MEAALADGEP…SLKVQKKNYR (129 aa). Phosphoserine occurs at positions 14, 65, and 68. A compositionally biased stretch (polar residues) spans 62–71; sequence PSLSPASLHS. Composition is skewed to basic and acidic residues over residues 73 to 88, 95 to 109, and 116 to 129; these read GFER…KDDS, SKSE…EKDS, and TKKE…KNYR. The PH domain occupies 148-265; sequence VIVMADWLKI…WMDALELALK (118 aa). Phosphoserine occurs at positions 314, 328, and 342. The segment covering 321–336 has biased composition (basic and acidic residues); that stretch reads FKDQDLYSDKSDKEND. The interval 321-374 is disordered; the sequence is FKDQDLYSDKSDKENDPEHDESDNEVLGKSEESDTDTSERQDDSYIDPEPVEPL. Basic and acidic residues predominate over residues 346–363; the sequence is VLGKSEESDTDTSERQDD. Residues 420–425, 482–485, and 514–515 each bind a 1,2-diacyl-sn-glycero-3-phospho-(1D-myo-inositol 4-phosphate); these read LSRVVL, KPYN, and HH. Residues 420-425 and N485 contribute to the a 1,2-diacyl-sn-glycero-3-phospho-L-serine site; that span reads LSRVVL. Residue S540 coordinates a 1,2-diacyl-sn-glycero-3-phospho-L-serine. A 1,2-diacyl-sn-glycero-3-phospho-(1D-myo-inositol 4-phosphate)-binding residues include K706, E710, and R714. Residues 772-823 are disordered; sequence HRTPMVSVPKMKHKPTRQQKKVVKGYSSPEPDIQDSSGSEAQSVKPSTRRKK. Residues 781–794 are compositionally biased toward basic residues; it reads KMKHKPTRQQKKVV. Positions 805 to 817 are enriched in polar residues; it reads QDSSGSEAQSVKP. 4 positions are modified to phosphoserine: S807, S808, S810, and S814. The helical transmembrane segment at 871–888 threads the bilayer; that stretch reads YFVIFLLILLQVIINFIF.

Belongs to the OSBP family. As to quaternary structure, interacts with SPAG5. Interacts with NUP62. Widely expressed. Most abundant in liver, spleen, kidney, brain and adipose tissue.

The protein localises to the endoplasmic reticulum membrane. The protein resides in the nucleus membrane. Functionally, lipid transporter involved in lipid countertransport between the endoplasmic reticulum and the plasma membrane: specifically exchanges phosphatidylserine with phosphatidylinositol 4-phosphate (PI4P), delivering phosphatidylserine to the plasma membrane in exchange for PI4P, which is degraded by the SAC1/SACM1L phosphatase in the endoplasmic reticulum. Binds phosphatidylserine and PI4P in a mutually exclusive manner. Binds oxysterol, 25-hydroxycholesterol and cholesterol. The sequence is that of Oxysterol-binding protein-related protein 8 from Mus musculus (Mouse).